Here is a 916-residue protein sequence, read N- to C-terminus: Translation initiation factor IF-2 (916 aa).

The interval 1–325 (MTDSNDDKTL…QEKFRRSQVQ (325 aa)) is disordered. A compositionally biased stretch (low complexity) spans 60–91 (ITPATPAAPVRAAEPAPAPAQARPQQSTPAPR). The segment covering 97-108 (GQANQRPQQSYQ) has biased composition (polar residues). Basic and acidic residues predominate over residues 125-182 (SPEEMDARRRALAESQARDAQDAIRRAEEEKRRAAEEAVRKAAEAEEAARRAVEEAAR). Low complexity-rich tracts occupy residues 183-209 (QAEA…AEAR) and 229-243 (DGAA…PAAV). A tr-type G domain is found at 414 to 581 (SRPPVVTIMG…AVLLQAEILD (168 aa)). The G1 stretch occupies residues 423–430 (GHVDHGKT). Residue 423 to 430 (GHVDHGKT) participates in GTP binding. Residues 448–452 (GITQH) are G2. Residues 469–472 (DTPG) form a G3 region. GTP is bound by residues 469-473 (DTPGH) and 523-526 (NKID). Residues 523 to 526 (NKID) form a G4 region. The G5 stretch occupies residues 559-561 (SAK).

It belongs to the TRAFAC class translation factor GTPase superfamily. Classic translation factor GTPase family. IF-2 subfamily.

It localises to the cytoplasm. In terms of biological role, one of the essential components for the initiation of protein synthesis. Protects formylmethionyl-tRNA from spontaneous hydrolysis and promotes its binding to the 30S ribosomal subunits. Also involved in the hydrolysis of GTP during the formation of the 70S ribosomal complex. This Rhizobium etli (strain ATCC 51251 / DSM 11541 / JCM 21823 / NBRC 15573 / CFN 42) protein is Translation initiation factor IF-2.